We begin with the raw amino-acid sequence, 447 residues long: Argininosuccinate synthase (447 aa).

ATP contacts are provided by residues 17-25 (AFSGGLDTS) and Ala43. Tyr99 contributes to the L-citrulline binding site. Positions 129 and 131 each coordinate ATP. The L-aspartate site is built by Thr131, Asn135, and Asp136. Residue Asn135 participates in L-citrulline binding. Asp136 is a binding site for ATP. L-citrulline-binding residues include Arg139 and Ser192. Residue Asp194 coordinates ATP. L-citrulline-binding residues include Thr201, Glu203, and Glu280.

This sequence belongs to the argininosuccinate synthase family. Type 2 subfamily. In terms of assembly, homotetramer.

It is found in the cytoplasm. It carries out the reaction L-citrulline + L-aspartate + ATP = 2-(N(omega)-L-arginino)succinate + AMP + diphosphate + H(+). The protein operates within amino-acid biosynthesis; L-arginine biosynthesis; L-arginine from L-ornithine and carbamoyl phosphate: step 2/3. This Salmonella heidelberg (strain SL476) protein is Argininosuccinate synthase.